Consider the following 458-residue polypeptide: Smoothelin-like protein 2 (458 aa).

Residues 24 to 88 (LEGAVRALHE…RQVESLGLTT (65 aa)) are a coiled coil. Disordered regions lie at residues 87-111 (TTGL…RAPR), 123-142 (FSLS…SELE), and 151-312 (IIEN…GAQA). Residues 94-104 (PGTPSPPPAPG) are compositionally biased toward pro residues. Phosphothreonine is present on threonine 96. Phosphoserine is present on residues serine 98, serine 126, and serine 131. The span at 131-142 (SLDHHDEASELE) shows a compositional bias: basic and acidic residues. 2 stretches are compositionally biased toward low complexity: residues 158–167 (PGADPGDGPP) and 209–220 (TSATALSPTSAA). Residues 225–244 (LSSSPSEATTPWTPSPSEKN) show a composition bias toward polar residues. A compositionally biased stretch (low complexity) spans 245 to 254 (SSLPRSLSSS). Phosphoserine occurs at positions 252, 254, and 267. Over residues 270 to 283 (LVTPPQSPPSPQPP) the composition is skewed to pro residues. A Phosphothreonine modification is found at threonine 272. Phosphoserine is present on serine 276. Basic and acidic residues predominate over residues 290–299 (RPGERRRELV). The segment covering 300–310 (RSQTLPRTSGA) has biased composition (polar residues). Serine 341 bears the Phosphoserine mark. In terms of domain architecture, Calponin-homology (CH) spans 348–455 (SSIKQILLEW…YVQSLYNHLR (108 aa)).

This sequence belongs to the smoothelin family.

This chain is Smoothelin-like protein 2 (SMTNL2), found in Bos taurus (Bovine).